We begin with the raw amino-acid sequence, 103 residues long: Nucleoid-associated protein NIS_0256 (103 aa).

The protein belongs to the YbaB/EbfC family. Homodimer.

It is found in the cytoplasm. Its subcellular location is the nucleoid. Functionally, binds to DNA and alters its conformation. May be involved in regulation of gene expression, nucleoid organization and DNA protection. This chain is Nucleoid-associated protein NIS_0256, found in Nitratiruptor sp. (strain SB155-2).